A 318-amino-acid polypeptide reads, in one-letter code: Lipoyl synthase 1 (318 aa).

A disordered region spans residues 6–32 (DTISNPLRPRHPEKVNRPDSASPPKPD). The [4Fe-4S] cluster site is built by C60, C65, C71, C86, C90, C93, and S299. Positions 72–288 (WDKKHATFMI…EKVAYTKGFL (217 aa)) constitute a Radical SAM core domain.

Belongs to the radical SAM superfamily. Lipoyl synthase family. [4Fe-4S] cluster serves as cofactor.

It is found in the cytoplasm. The catalysed reaction is [[Fe-S] cluster scaffold protein carrying a second [4Fe-4S](2+) cluster] + N(6)-octanoyl-L-lysyl-[protein] + 2 oxidized [2Fe-2S]-[ferredoxin] + 2 S-adenosyl-L-methionine + 4 H(+) = [[Fe-S] cluster scaffold protein] + N(6)-[(R)-dihydrolipoyl]-L-lysyl-[protein] + 4 Fe(3+) + 2 hydrogen sulfide + 2 5'-deoxyadenosine + 2 L-methionine + 2 reduced [2Fe-2S]-[ferredoxin]. Its pathway is protein modification; protein lipoylation via endogenous pathway; protein N(6)-(lipoyl)lysine from octanoyl-[acyl-carrier-protein]: step 2/2. In terms of biological role, catalyzes the radical-mediated insertion of two sulfur atoms into the C-6 and C-8 positions of the octanoyl moiety bound to the lipoyl domains of lipoate-dependent enzymes, thereby converting the octanoylated domains into lipoylated derivatives. This chain is Lipoyl synthase 1, found in Bradyrhizobium diazoefficiens (strain JCM 10833 / BCRC 13528 / IAM 13628 / NBRC 14792 / USDA 110).